Reading from the N-terminus, the 269-residue chain is GTP cyclohydrolase FolE2 (269 aa).

Belongs to the GTP cyclohydrolase IV family.

The catalysed reaction is GTP + H2O = 7,8-dihydroneopterin 3'-triphosphate + formate + H(+). Its pathway is cofactor biosynthesis; 7,8-dihydroneopterin triphosphate biosynthesis; 7,8-dihydroneopterin triphosphate from GTP: step 1/1. Converts GTP to 7,8-dihydroneopterin triphosphate. This is GTP cyclohydrolase FolE2 from Thiobacillus denitrificans (strain ATCC 25259 / T1).